The sequence spans 386 residues: Na(+)/H(+) antiporter NhaA (386 aa).

11 helical membrane passes run 11-31 (NDAT…FLAN), 60-80 (LLLW…GLEV), 96-116 (MFPL…YAAF), 126-146 (GWAI…ALLG), 155-175 (MFLM…IALF), 180-200 (LSLI…VLNG), 218-238 (VAVL…GLFI), 260-280 (VSWL…LSGV), 293-313 (ITLG…WLAV), 326-346 (LIDI…SIFI), and 358-378 (LVTL…LVGY).

The protein belongs to the NhaA Na(+)/H(+) (TC 2.A.33) antiporter family.

The protein localises to the cell inner membrane. The catalysed reaction is Na(+)(in) + 2 H(+)(out) = Na(+)(out) + 2 H(+)(in). Its function is as follows. Na(+)/H(+) antiporter that extrudes sodium in exchange for external protons. In Erwinia tasmaniensis (strain DSM 17950 / CFBP 7177 / CIP 109463 / NCPPB 4357 / Et1/99), this protein is Na(+)/H(+) antiporter NhaA.